The primary structure comprises 799 residues: Disintegrin and metalloproteinase domain-containing protein B (799 aa).

An N-terminal signal peptide occupies residues 1–23 (MKAFSCLLSVIATAASLFQHVDA). Residues 24-707 (RSHARDKLNN…VSDWVSRHKP (684 aa)) are Extracellular-facing. 5 N-linked (GlcNAc...) asparagine glycosylation sites follow: Asn-33, Asn-227, Asn-228, Asn-314, and Asn-408. One can recognise a Peptidase M12B domain in the interval 272–511 (KVALIGVVAD…RTILTSCLTT (240 aa)). 3 cysteine pairs are disulfide-bonded: Cys-396-Cys-496, Cys-449-Cys-460, and Cys-581-Cys-601. His-432 contributes to the Zn(2+) binding site. Glu-433 is a catalytic residue. Positions 436 and 442 each coordinate Zn(2+). Residues 520–609 (GQQCGNGIVE…DCPHDIHSKD (90 aa)) enclose the Disintegrin domain. The helical transmembrane segment at 708 to 728 (IVIGVAVGAGCLLLLAIASCI) threads the bilayer. Residues 729-799 (CGRSRRQRPR…PGHLPSTRYA (71 aa)) are Cytoplasmic-facing. The tract at residues 753–799 (VYNGWNGAPPNAQQSSPGGHPPYNNIPPPINAPPPAYPGHLPSTRYA) is disordered. A compositionally biased stretch (pro residues) spans 776–789 (NNIPPPINAPPPAY).

The cofactor is Zn(2+).

It localises to the membrane. Functionally, probable zinc protease. This is Disintegrin and metalloproteinase domain-containing protein B (ADM-B) from Arthroderma benhamiae (strain ATCC MYA-4681 / CBS 112371) (Trichophyton mentagrophytes).